The sequence spans 78 residues: Short neurotoxin SNTX6 (78 aa).

A signal peptide spans 1–21; it reads MKTLLLTFLVVTIVCLDLGYT. Intrachain disulfides connect Cys24–Cys40, Cys33–Cys58, Cys62–Cys70, and Cys71–Cys76.

This sequence belongs to the three-finger toxin family. Short-chain subfamily. Expressed by the venom gland.

The protein localises to the secreted. In terms of biological role, this three-finger toxin binds and inhibits the nicotinic acetylcholine receptor (nAChR). This chain is Short neurotoxin SNTX6, found in Ophiophagus hannah (King cobra).